We begin with the raw amino-acid sequence, 418 residues long: Glutamyl-tRNA reductase (418 aa).

Residues 49 to 52 (TCNR), Ser106, 111 to 113 (EPQ), and Gln117 each bind substrate. The active-site Nucleophile is Cys50. An NADP(+)-binding site is contributed by 186-191 (GAGEMI).

It belongs to the glutamyl-tRNA reductase family. Homodimer.

It catalyses the reaction (S)-4-amino-5-oxopentanoate + tRNA(Glu) + NADP(+) = L-glutamyl-tRNA(Glu) + NADPH + H(+). The protein operates within porphyrin-containing compound metabolism; protoporphyrin-IX biosynthesis; 5-aminolevulinate from L-glutamyl-tRNA(Glu): step 1/2. Functionally, catalyzes the NADPH-dependent reduction of glutamyl-tRNA(Glu) to glutamate 1-semialdehyde (GSA). The polypeptide is Glutamyl-tRNA reductase (Alcanivorax borkumensis (strain ATCC 700651 / DSM 11573 / NCIMB 13689 / SK2)).